We begin with the raw amino-acid sequence, 1604 residues long: Transposon Ty1-DR4 Gag-Pol polyprotein (1604 aa).

3 stretches are compositionally biased toward polar residues: residues 1-23, 48-60, and 127-152; these read MESQ…SVTS, TKAN…TPAS, and QSQF…GNTF. 3 disordered regions span residues 1–93, 126–174, and 352–421; these read MESQ…MMTQ, PQSQ…PPPM, and GSRN…SKST. A compositionally biased stretch (low complexity) spans 153–165; sequence TDSSSADSDMTST. An RNA-binding region spans residues 299 to 401; the sequence is NNGIHINNKV…NSKSKTARAH (103 aa). Residues 402 to 418 are compositionally biased toward low complexity; the sequence is NVSTSNNSPSTDNDSIS. Residue S416 is modified to Phosphoserine. D461 (for protease activity; shared with dimeric partner) is an active-site residue. An integrase-type zinc finger-like region spans residues 583-640; it reads NVHTSESTRKYPYPFIHRMLAHANAQTIRYSLKNNTITYFNESDVDWSSAIDYQCPDC. One can recognise an Integrase catalytic domain in the interval 660 to 835; sequence NSYEPFQYLH…AGLDISTLLP (176 aa). D671 and D736 together coordinate Mg(2+). Disordered regions lie at residues 956-1087, 1092-1111, and 1130-1187; these read SKAV…ETEK, RSPS…NIVP, and DLPL…DNET. Low complexity predominate over residues 960–969; sequence SPTDSTPPST. A compositionally biased stretch (polar residues) spans 1005 to 1015; that stretch reads STPQISNIEST. The segment covering 1038-1053 has biased composition (basic and acidic residues); sequence ESSHASKSKDFRHSDS. Polar residues-rich tracts occupy residues 1054-1082 and 1101-1111; these read YSEN…QISD and PENNSSHNIVP. Residues 1178–1212 carry the Bipartite nuclear localization signal motif; it reads KKRSLEDNETEIKVSRDTWNTKNMRSLEPPRSKKR. Residues 1338–1476 enclose the Reverse transcriptase Ty1/copia-type domain; the sequence is NNYYITQLDI…DILGLEIKYQ (139 aa). Mg(2+) is bound by residues D1346, D1427, and D1428.

The capsid protein forms a homotrimer, from which the VLPs are assembled. The protease is a homodimer, whose active site consists of two apposed aspartic acid residues. Initially, virus-like particles (VLPs) are composed of the structural unprocessed proteins Gag and Gag-Pol, and also contain the host initiator methionine tRNA (tRNA(i)-Met) which serves as a primer for minus-strand DNA synthesis, and a dimer of genomic Ty RNA. Processing of the polyproteins occurs within the particle and proceeds by an ordered pathway, called maturation. First, the protease (PR) is released by autocatalytic cleavage of the Gag-Pol polyprotein yielding capsid protein p45 and a Pol-p154 precursor protein. This cleavage is a prerequisite for subsequent processing of Pol-p154 at the remaining sites to release the mature structural and catalytic proteins. Maturation takes place prior to the RT reaction and is required to produce transposition-competent VLPs.

Its subcellular location is the cytoplasm. It is found in the nucleus. It catalyses the reaction DNA(n) + a 2'-deoxyribonucleoside 5'-triphosphate = DNA(n+1) + diphosphate. The catalysed reaction is Endonucleolytic cleavage to 5'-phosphomonoester.. Its function is as follows. Capsid protein (CA) is the structural component of the virus-like particle (VLP), forming the shell that encapsulates the retrotransposons dimeric RNA genome. The particles are assembled from trimer-clustered units and there are holes in the capsid shells that allow for the diffusion of macromolecules. CA also has nucleocapsid-like chaperone activity, promoting primer tRNA(i)-Met annealing to the multipartite primer-binding site (PBS), dimerization of Ty1 RNA and initiation of reverse transcription. Functionally, the aspartyl protease (PR) mediates the proteolytic cleavages of the Gag and Gag-Pol polyproteins after assembly of the VLP. Reverse transcriptase/ribonuclease H (RT) is a multifunctional enzyme that catalyzes the conversion of the retro-elements RNA genome into dsDNA within the VLP. The enzyme displays a DNA polymerase activity that can copy either DNA or RNA templates, and a ribonuclease H (RNase H) activity that cleaves the RNA strand of RNA-DNA heteroduplexes during plus-strand synthesis and hydrolyzes RNA primers. The conversion leads to a linear dsDNA copy of the retrotransposon that includes long terminal repeats (LTRs) at both ends. In terms of biological role, integrase (IN) targets the VLP to the nucleus, where a subparticle preintegration complex (PIC) containing at least integrase and the newly synthesized dsDNA copy of the retrotransposon must transit the nuclear membrane. Once in the nucleus, integrase performs the integration of the dsDNA into the host genome. The chain is Transposon Ty1-DR4 Gag-Pol polyprotein (TY1B-DR4) from Saccharomyces cerevisiae (strain ATCC 204508 / S288c) (Baker's yeast).